Consider the following 221-residue polypeptide: Flavin-dependent thymidylate synthase (221 aa).

The ThyX domain occupies 9-209 (GFVKLLDHMG…PWTYESFIRY (201 aa)). Residues serine 55, 78–80 (RHR), and glutamate 86 each bind FAD. DUMP contacts are provided by residues 75 to 78 (QWMR), 86 to 90 (ELSGR), and arginine 148. The ThyX motif motif lies at 78-88 (RHRIASYNELS). Residues 164–166 (NAR) and asparagine 170 contribute to the FAD site. Residue arginine 175 coordinates dUMP. Arginine 175 serves as the catalytic Involved in ionization of N3 of dUMP, leading to its activation.

The protein belongs to the thymidylate synthase ThyX family. Homotetramer. FAD serves as cofactor.

The enzyme catalyses dUMP + (6R)-5,10-methylene-5,6,7,8-tetrahydrofolate + NADPH + H(+) = dTMP + (6S)-5,6,7,8-tetrahydrofolate + NADP(+). It participates in pyrimidine metabolism; dTTP biosynthesis. Functionally, catalyzes the reductive methylation of 2'-deoxyuridine-5'-monophosphate (dUMP) to 2'-deoxythymidine-5'-monophosphate (dTMP) while utilizing 5,10-methylenetetrahydrofolate (mTHF) as the methyl donor, and NADPH and FADH(2) as the reductant. The chain is Flavin-dependent thymidylate synthase from Pseudothermotoga lettingae (strain ATCC BAA-301 / DSM 14385 / NBRC 107922 / TMO) (Thermotoga lettingae).